Consider the following 512-residue polypeptide: Kelch repeat protein C2 (512 aa).

The 66-residue stretch at 2 to 67 folds into the BTB domain; it reads ESVIFSINGE…MRWKKINITV (66 aa). One can recognise a BACK domain in the interval 102–176; the sequence is CIRMFNFSKR…LLKWIHKNPN (75 aa). 6 Kelch repeats span residues 216 to 261, 262 to 307, 309 to 354, 356 to 403, 405 to 449, and 452 to 498; these read IKHN…LYNC, LYII…VNDG, LYVI…FVND, IYVM…EYDG, IYAI…SCGD, and LIIA…THKS.

This sequence belongs to the poxviruses Kelch family.

This Camelus protein is Kelch repeat protein C2.